A 313-amino-acid chain; its full sequence is Malate dehydrogenase (313 aa).

Residues 11–16 (GSGNIG) and D35 each bind NAD(+). 2 residues coordinate substrate: R84 and R90. Residues N97 and 120–122 (VTN) each bind NAD(+). Residues N122 and R153 each contribute to the substrate site. H177 acts as the Proton acceptor in catalysis.

This sequence belongs to the LDH/MDH superfamily. MDH type 3 family.

It catalyses the reaction (S)-malate + NAD(+) = oxaloacetate + NADH + H(+). In terms of biological role, catalyzes the reversible oxidation of malate to oxaloacetate. The chain is Malate dehydrogenase from Ehrlichia ruminantium (strain Welgevonden).